A 94-amino-acid chain; its full sequence is CRISPR-associated endoribonuclease Cas2 (94 aa).

Asp-11 provides a ligand contact to Mg(2+).

Belongs to the CRISPR-associated endoribonuclease Cas2 protein family. As to quaternary structure, homodimer, forms a heterotetramer with a Cas1 homodimer. Mg(2+) serves as cofactor.

Functionally, CRISPR (clustered regularly interspaced short palindromic repeat), is an adaptive immune system that provides protection against mobile genetic elements (viruses, transposable elements and conjugative plasmids). CRISPR clusters contain sequences complementary to antecedent mobile elements and target invading nucleic acids. CRISPR clusters are transcribed and processed into CRISPR RNA (crRNA). Functions as a ssRNA-specific endoribonuclease. Involved in the integration of spacer DNA into the CRISPR cassette. In Allochromatium vinosum (strain ATCC 17899 / DSM 180 / NBRC 103801 / NCIMB 10441 / D) (Chromatium vinosum), this protein is CRISPR-associated endoribonuclease Cas2.